We begin with the raw amino-acid sequence, 729 residues long: Catalase-peroxidase (729 aa).

A disordered region spans residues 1-20; it reads MHNGSNGSVEQRDSMPETSR. A compositionally biased stretch (basic and acidic residues) spans 10 to 20; that stretch reads EQRDSMPETSR. Residues 91-214 constitute a cross-link (tryptophyl-tyrosyl-methioninium (Trp-Tyr) (with M-240)); the sequence is WHAAGTYRTT…LGATVMGLIY (124 aa). H92 serves as the catalytic Proton acceptor. The tryptophyl-tyrosyl-methioninium (Tyr-Met) (with W-91) cross-link spans 214 to 240; sequence YVNPEGPESTPDPEWSAQRIRKSFGRM. H255 provides a ligand contact to heme b.

The protein belongs to the peroxidase family. Peroxidase/catalase subfamily. In terms of assembly, homodimer or homotetramer. It depends on heme b as a cofactor. Post-translationally, formation of the three residue Trp-Tyr-Met cross-link is important for the catalase, but not the peroxidase activity of the enzyme.

The enzyme catalyses H2O2 + AH2 = A + 2 H2O. The catalysed reaction is 2 H2O2 = O2 + 2 H2O. Bifunctional enzyme with both catalase and broad-spectrum peroxidase activity. This chain is Catalase-peroxidase, found in Salinibacter ruber (strain DSM 13855 / M31).